Reading from the N-terminus, the 301-residue chain is Homeobox protein knotted-1-like 1 (301 aa).

Positions 141–170 (CSGATSPPATTATHSDEMVGSSDEDQCSGE) are disordered. Residues 144–153 (ATSPPATTAT) show a composition bias toward low complexity. Residues 188 to 208 (ELKEMLLKKYSGCLSRLRSEF) form the ELK domain. Positions 209–272 (LKKRKKGKLP…NQRKRHWKPS (64 aa)) form a DNA-binding region, homeobox; TALE-type.

It belongs to the TALE/KNOX homeobox family.

The protein localises to the nucleus. Functionally, probable transcription factor that may be involved in shoot formation during early embryogenesis. The chain is Homeobox protein knotted-1-like 1 (OSH6) from Oryza sativa subsp. japonica (Rice).